Reading from the N-terminus, the 310-residue chain is uncharacterized protein (310 aa).

The next 5 membrane-spanning stretches (helical) occupy residues 10 to 30, 44 to 64, 78 to 98, 113 to 133, and 161 to 181; these read AVLSIGAALATMGLKLGAYAI, TVNLASAIVAFWALSLAATPA, FSSGLEGAFIFVAALGIGYSA, LGIALAIAATALNGTVAWILW, and VVVAVALIFVTGWEWLDPLIA. Over residues 285–297 the composition is skewed to basic and acidic residues; that stretch reads PLEDPKSWQHPDE. The tract at residues 285 to 310 is disordered; the sequence is PLEDPKSWQHPDEFPPSAPLNRDKPN.

It belongs to the cation diffusion facilitator (CDF) transporter (TC 2.A.4) family.

It is found in the cell membrane. This is an uncharacterized protein from Synechocystis sp. (strain ATCC 27184 / PCC 6803 / Kazusa).